The primary structure comprises 737 residues: MGTKFPKASQALAQDPTTRRIWYGIATANDFETNDGITEENLYQKIFASHFGHLAIIFLWTSGNLFHVAWQGNFEQWVKDPLNTRPIAHAISDPHFGQRAIEAFSQAGASSPVNISYSGVYQWWYTQGMRTNEELYNGAIFLLILSALSLFAGWLHLQPKFRPNLSWFKNAESRLNHHLGGLFGTSSLAWTGHIVHVAIPESRGQHVGWDNFLQVAPHPAGLQPFFTGNWGVYTENPDTANHVFGSSDGAGTAILTFLGGFHPQTQSLWLTDIAHHHLAIAVLFIVAGHMYRTNFGIGHSIKEILNGHRPPGGRLGAGHVGLYDTVNNSLHFQLGLALAALGVITSLVAQHMYSIPPYAYLARDFTTQAALYTHHQYIAGFLMVGAFAHGAIFLVRDYDAEQNKNNVLARIIDHKEAIISHLSWVSLFLGFHTLGLYVHNDVVQAFGTPEKQILIEPVFAQWIQSVHGKSLYGFEVLLNNADSITRVAPGSAQPIWLPGWLDAINSGNNSLFLTIGPGDFLVHHAIALGLHTTTLILVKGALDARGSKLMPDKKDFGYSFPCDGPGRGGTCDISAWDAFYLAVFWMLNTIGWTTFYWHWKHLGVWQGNVAQFNESSTYLMGWFRDYLWLNSSQLINGYNPFGMNNLSVWAWMFLFGHLIWATGFMFLISWRGYWQELIETLVWAHERTPLANLVRWKDKPVALSIVQARLVGLAHFAVGYIVTYAAFLIASTASKFG.

8 helical membrane passes run 46 to 69 (IFAS…FHVA), 135 to 158 (LYNG…LHLQ), 175 to 199 (LNHH…HVAI), 273 to 291 (IAHH…GHMY), 330 to 353 (LHFQ…QHMY), 369 to 395 (AALY…IFLV), 417 to 439 (AIIS…LYVH), and 520 to 538 (FLVH…LILV). [4Fe-4S] cluster is bound by residues cysteine 562 and cysteine 571. 2 consecutive transmembrane segments (helical) span residues 578 to 599 (AFYL…YWHW) and 646 to 668 (LSVW…MFLI). Residues histidine 657, methionine 665, and tyrosine 673 each contribute to the chlorophyll a site. Tryptophan 674 contributes to the phylloquinone binding site. The helical transmembrane segment at 710–730 (LVGLAHFAVGYIVTYAAFLIA) threads the bilayer.

This sequence belongs to the PsaA/PsaB family. As to quaternary structure, the PsaA/B heterodimer binds the P700 chlorophyll special pair and subsequent electron acceptors. PSI consists of a core antenna complex that captures photons, and an electron transfer chain that converts photonic excitation into a charge separation. The eukaryotic PSI reaction center is composed of at least 11 subunits. It depends on P700 is a chlorophyll a/chlorophyll a' dimer, A0 is one or more chlorophyll a, A1 is one or both phylloquinones and FX is a shared 4Fe-4S iron-sulfur center. as a cofactor.

It is found in the plastid. The protein localises to the cyanelle thylakoid membrane. The catalysed reaction is reduced [plastocyanin] + hnu + oxidized [2Fe-2S]-[ferredoxin] = oxidized [plastocyanin] + reduced [2Fe-2S]-[ferredoxin]. PsaA and PsaB bind P700, the primary electron donor of photosystem I (PSI), as well as the electron acceptors A0, A1 and FX. PSI is a cytochrome c6-ferredoxin oxidoreductase, converting photonic excitation into a charge separation, which transfers an electron from the donor P700 chlorophyll pair to the spectroscopically characterized acceptors A0, A1, FX, FA and FB in turn. Oxidized P700 is reduced on the lumenal side of the thylakoid membrane by cytochrome c6. The sequence is that of Photosystem I P700 chlorophyll a apoprotein A2 from Cyanophora paradoxa.